A 170-amino-acid chain; its full sequence is Ribosome maturation factor RimM (170 aa).

Residues 97 to 170 (KPDEYYWVDL…LVVVDWDPEF (74 aa)) form the PRC barrel domain.

This sequence belongs to the RimM family. Binds ribosomal protein uS19.

It is found in the cytoplasm. Its function is as follows. An accessory protein needed during the final step in the assembly of 30S ribosomal subunit, possibly for assembly of the head region. Essential for efficient processing of 16S rRNA. May be needed both before and after RbfA during the maturation of 16S rRNA. It has affinity for free ribosomal 30S subunits but not for 70S ribosomes. In Stenotrophomonas maltophilia (strain K279a), this protein is Ribosome maturation factor RimM.